The sequence spans 450 residues: Pancreatic triacylglycerol lipase (450 aa).

3 disulfide bridges follow: Cys-4/Cys-10, Cys-91/Cys-102, and Cys-91/Cys-104. Ser-153 acts as the Nucleophile in catalysis. A glycan (N-linked (GlcNAc...) asparagine) is linked at Asn-167. Asp-177 functions as the Charge relay system in the catalytic mechanism. Ca(2+)-binding residues include Glu-188, Arg-191, Asp-193, and Asp-196. Cysteines 238 and 262 form a disulfide. His-264 serves as the catalytic Charge relay system. 3 disulfide bridges follow: Cys-286–Cys-297, Cys-300–Cys-305, and Cys-434–Cys-450. One can recognise a PLAT domain in the interval 339-450 (WRYKVSVTLS…EEVLLTLNPC (112 aa)).

Belongs to the AB hydrolase superfamily. Lipase family. As to quaternary structure, forms a 1:1 stoichiometric complex with (pro)colipase/CLPS.

Its subcellular location is the secreted. The catalysed reaction is a triacylglycerol + H2O = a diacylglycerol + a fatty acid + H(+). The enzyme catalyses 1,2,3-tributanoylglycerol + H2O = dibutanoylglycerol + butanoate + H(+). It catalyses the reaction 1,2,3-tri-(9Z-octadecenoyl)-glycerol + H2O = di-(9Z)-octadecenoylglycerol + (9Z)-octadecenoate + H(+). It carries out the reaction all-trans-retinyl hexadecanoate + H2O = all-trans-retinol + hexadecanoate + H(+). The catalysed reaction is 1,2-di-(9Z-octadecenoyl)-glycerol + H2O = (9Z-octadecenoyl)-glycerol + (9Z)-octadecenoate + H(+). With respect to regulation, inhibited by bile salts, is reactivated by (pro)colipase/CLPS. Its function is as follows. Plays an important role in fat metabolism. It preferentially splits the esters of long-chain fatty acids at positions 1 and 3, producing mainly 2-monoacylglycerol and free fatty acids, and shows considerably higher activity against insoluble emulsified substrates than against soluble ones. The chain is Pancreatic triacylglycerol lipase (PNLIP) from Sus scrofa (Pig).